The chain runs to 176 residues: Nutrient stress-induced DNA-binding protein (176 aa).

Belongs to the Dps family. Hexamer.

Involved in protection of chromosomal DNA from damage under nutrient-limited and oxidative stress conditions. Binds heme. This chain is Nutrient stress-induced DNA-binding protein (dpsA), found in Synechococcus sp. (strain ATCC 27144 / PCC 6301 / SAUG 1402/1) (Anacystis nidulans).